The primary structure comprises 233 residues: Large ribosomal subunit protein uL1 (233 aa).

It belongs to the universal ribosomal protein uL1 family. As to quaternary structure, part of the 50S ribosomal subunit.

In terms of biological role, binds directly to 23S rRNA. The L1 stalk is quite mobile in the ribosome, and is involved in E site tRNA release. Its function is as follows. Protein L1 is also a translational repressor protein, it controls the translation of the L11 operon by binding to its mRNA. This chain is Large ribosomal subunit protein uL1, found in Buchnera aphidicola subsp. Baizongia pistaciae (strain Bp).